The primary structure comprises 123 residues: Large ribosomal subunit protein bL12 (123 aa).

It belongs to the bacterial ribosomal protein bL12 family. In terms of assembly, homodimer. Part of the ribosomal stalk of the 50S ribosomal subunit. Forms a multimeric L10(L12)X complex, where L10 forms an elongated spine to which 2 to 4 L12 dimers bind in a sequential fashion. Binds GTP-bound translation factors.

Its function is as follows. Forms part of the ribosomal stalk which helps the ribosome interact with GTP-bound translation factors. Is thus essential for accurate translation. The protein is Large ribosomal subunit protein bL12 of Neisseria meningitidis serogroup C (strain 053442).